Here is a 956-residue protein sequence, read N- to C-terminus: Glycine dehydrogenase (decarboxylating) (956 aa).

Lysine 697 is subject to N6-(pyridoxal phosphate)lysine.

The protein belongs to the GcvP family. The glycine cleavage system is composed of four proteins: P, T, L and H. Pyridoxal 5'-phosphate serves as cofactor.

It carries out the reaction N(6)-[(R)-lipoyl]-L-lysyl-[glycine-cleavage complex H protein] + glycine + H(+) = N(6)-[(R)-S(8)-aminomethyldihydrolipoyl]-L-lysyl-[glycine-cleavage complex H protein] + CO2. In terms of biological role, the glycine cleavage system catalyzes the degradation of glycine. The P protein binds the alpha-amino group of glycine through its pyridoxal phosphate cofactor; CO(2) is released and the remaining methylamine moiety is then transferred to the lipoamide cofactor of the H protein. The polypeptide is Glycine dehydrogenase (decarboxylating) (Cereibacter sphaeroides (strain KD131 / KCTC 12085) (Rhodobacter sphaeroides)).